Consider the following 352-residue polypeptide: Photosystem II D2 protein (352 aa).

Residues 40–60 (CAYLAVGAWFTGTTFVTSWYT) traverse the membrane as a helical segment. Histidine 117 contacts chlorophyll a. Residues 124 to 140 (GFTLRQFEIARLIGLRP) traverse the membrane as a helical segment. Residues glutamine 129 and asparagine 142 each coordinate pheophytin a. A helical membrane pass occupies residues 152–165 (VFVSVFLLYPLGQA). Histidine 197 provides a ligand contact to chlorophyll a. A helical membrane pass occupies residues 207–227 (AALLCAIHGATVENTLFEDGD). 2 residues coordinate a plastoquinone: histidine 214 and phenylalanine 261. Position 214 (histidine 214) interacts with Fe cation. Residue histidine 268 coordinates Fe cation. Residues 278-294 (GLWMSAIGVVGLGVNLR) form a helical membrane-spanning segment.

This sequence belongs to the reaction center PufL/M/PsbA/D family. In terms of assembly, PSII is composed of 1 copy each of membrane proteins PsbA, PsbB, PsbC, PsbD, PsbE, PsbF, PsbH, PsbI, PsbJ, PsbK, PsbL, PsbM, PsbT, PsbX, PsbY, PsbZ, Psb30/Ycf12, at least 3 peripheral proteins of the oxygen-evolving complex and a large number of cofactors. It forms dimeric complexes. The D1/D2 heterodimer binds P680, chlorophylls that are the primary electron donor of PSII, and subsequent electron acceptors. It shares a non-heme iron and each subunit binds pheophytin, quinone, additional chlorophylls, carotenoids and lipids. There is also a Cl(-1) ion associated with D1 and D2, which is required for oxygen evolution. The PSII complex binds additional chlorophylls, carotenoids and specific lipids. is required as a cofactor.

Its subcellular location is the plastid. The protein resides in the cyanelle thylakoid membrane. It catalyses the reaction 2 a plastoquinone + 4 hnu + 2 H2O = 2 a plastoquinol + O2. Functionally, photosystem II (PSII) is a light-driven water:plastoquinone oxidoreductase that uses light energy to abstract electrons from H(2)O, generating O(2) and a proton gradient subsequently used for ATP formation. It consists of a core antenna complex that captures photons, and an electron transfer chain that converts photonic excitation into a charge separation. The D1/D2 (PsbA/PsbD) reaction center heterodimer binds P680, the primary electron donor of PSII as well as several subsequent electron acceptors. D2 is needed for assembly of a stable PSII complex. The polypeptide is Photosystem II D2 protein (Cyanophora paradoxa).